A 583-amino-acid polypeptide reads, in one-letter code: Sensor protein SrrB (583 aa).

At 1–11 (MMSRLNSVVIK) the chain is on the cytoplasmic side. The helical transmembrane segment at 12 to 32 (LWLTIILIVTTVLILLSIALI) threads the bilayer. Over 33 to 174 (TFMQYYFTQE…SIEDTNNAIT (142 aa)) the chain is Extracellular. Residues 175–195 (IITIITAVIFLTITTVFAFFL) form a helical membrane-spanning segment. Residues 196 to 583 (SSRITKPLRR…TFIIKLPKPE (388 aa)) lie on the Cytoplasmic side of the membrane. An HAMP domain is found at 197 to 249 (SRITKPLRRLRDQATRVSEGDYSYKPSVTTKDEIGQLSQAFNQMSTEIEEHVD). A Histidine kinase domain is found at 366–583 (NVSHELRTPI…TFIIKLPKPE (218 aa)). At histidine 369 the chain carries Phosphohistidine; by autocatalysis.

Its subcellular location is the cell membrane. The catalysed reaction is ATP + protein L-histidine = ADP + protein N-phospho-L-histidine.. Member of the two-component regulatory system SrrA/SrrB, which is involved in the global regulation of staphylococcal virulence factors in response to environmental oxygen levels as well as biofilm formation. Also plays an essential role in host-derived nitric oxide resistance by regulating hmp/flavohemoglobin, an enzyme that detoxifies nitric oxide by converting it to nitrate. Functions as a sensor protein kinase which is autophosphorylated at a histidine residue and transfers its phosphate group to SrrA. In turn, SrrA binds to the upstream promoter regions of the target genes to positively and negatively regulate their expression. The sequence is that of Sensor protein SrrB (srrB) from Staphylococcus aureus.